Here is a 931-residue protein sequence, read N- to C-terminus: Protein translocase subunit SecA (931 aa).

ATP contacts are provided by residues glutamine 87, 105 to 109 (GEGKT), and aspartate 515. Cysteine 915, cysteine 917, cysteine 926, and histidine 927 together coordinate Zn(2+).

The protein belongs to the SecA family. Monomer and homodimer. Part of the essential Sec protein translocation apparatus which comprises SecA, SecYEG and auxiliary proteins SecDF-YajC and YidC. Zn(2+) is required as a cofactor.

It is found in the cell inner membrane. It localises to the cytoplasm. The catalysed reaction is ATP + H2O + cellular proteinSide 1 = ADP + phosphate + cellular proteinSide 2.. In terms of biological role, part of the Sec protein translocase complex. Interacts with the SecYEG preprotein conducting channel. Has a central role in coupling the hydrolysis of ATP to the transfer of proteins into and across the cell membrane, serving both as a receptor for the preprotein-SecB complex and as an ATP-driven molecular motor driving the stepwise translocation of polypeptide chains across the membrane. The protein is Protein translocase subunit SecA of Burkholderia pseudomallei (strain K96243).